The primary structure comprises 140 residues: MNSFAFLLVCIQACLVQSVFSQCTSRAAVAADRGIIGGYGLGAPYGLGCGYGLEAPYGWAGYADYGYGLDAYGGIGEGNVAVAGELPVAGTTAVAGQVPIMGAVKFGGDVCAAGSVSIAGKCDCGCGEVYGYGLGAPYLY.

Residues methionine 1–serine 21 form the signal peptide.

This sequence belongs to the chorion protein family.

This protein is one of many from the eggshell of the gypsy moth. This is Chorion class A protein Ld2/Ld41 from Lymantria dispar (Gypsy moth).